The chain runs to 287 residues: Glutamate racemase (287 aa).

Over residues 1 to 15 the composition is skewed to polar residues; it reads MATKPQDANTTSREA. The disordered stretch occupies residues 1 to 25; the sequence is MATKPQDANTTSREAITSKADSPPR. Substrate-binding positions include 32–33 and 64–65; these read DS and YG. Residue Cys96 is the Proton donor/acceptor of the active site. Substrate is bound at residue 97-98; that stretch reads NT. The active-site Proton donor/acceptor is the Cys208. Residue 209 to 210 participates in substrate binding; it reads TH.

The protein belongs to the aspartate/glutamate racemases family.

It carries out the reaction L-glutamate = D-glutamate. Its pathway is cell wall biogenesis; peptidoglycan biosynthesis. Provides the (R)-glutamate required for cell wall biosynthesis. The sequence is that of Glutamate racemase from Yersinia pseudotuberculosis serotype IB (strain PB1/+).